The sequence spans 254 residues: 3-deoxy-manno-octulosonate cytidylyltransferase (254 aa).

Belongs to the KdsB family.

The protein resides in the cytoplasm. The enzyme catalyses 3-deoxy-alpha-D-manno-oct-2-ulosonate + CTP = CMP-3-deoxy-beta-D-manno-octulosonate + diphosphate. Its pathway is nucleotide-sugar biosynthesis; CMP-3-deoxy-D-manno-octulosonate biosynthesis; CMP-3-deoxy-D-manno-octulosonate from 3-deoxy-D-manno-octulosonate and CTP: step 1/1. It functions in the pathway bacterial outer membrane biogenesis; lipopolysaccharide biosynthesis. Activates KDO (a required 8-carbon sugar) for incorporation into bacterial lipopolysaccharide in Gram-negative bacteria. The polypeptide is 3-deoxy-manno-octulosonate cytidylyltransferase (Pseudomonas paraeruginosa (strain DSM 24068 / PA7) (Pseudomonas aeruginosa (strain PA7))).